We begin with the raw amino-acid sequence, 134 residues long: Arsenate reductase (134 aa).

Catalysis depends on nucleophile residues Cys-11, Cys-83, and Cys-90. 2 disulfides stabilise this stretch: Cys-11–Cys-83 and Cys-83–Cys-90.

The protein belongs to the low molecular weight phosphotyrosine protein phosphatase family. Thioredoxin-coupled ArsC subfamily.

Its subcellular location is the cytoplasm. The enzyme catalyses arsenate + [thioredoxin]-dithiol + H(+) = arsenite + [thioredoxin]-disulfide + H2O. Functionally, catalyzes the reduction of arsenate [As(V)] to arsenite [As(III)]. The polypeptide is Arsenate reductase (Bacillus cereus (strain ZK / E33L)).